The following is a 330-amino-acid chain: Phospho-N-acetylmuramoyl-pentapeptide-transferase (330 aa).

Helical transmembrane passes span 3–23 (SVVL…SSFI), 49–69 (TPTM…AVVA), 71–91 (PNPA…VGLY), 111–131 (FLLL…YVGV), 145–165 (VLGP…FVIV), 179–199 (GLAA…AFLE), 204–224 (LAII…YNSH), 228–248 (IFMG…AAIL), 256–276 (PVIG…VVVF), and 307–327 (FWIV…FFLY).

This sequence belongs to the glycosyltransferase 4 family. MraY subfamily. Mg(2+) serves as cofactor.

The protein resides in the cell membrane. The catalysed reaction is UDP-N-acetyl-alpha-D-muramoyl-L-alanyl-gamma-D-glutamyl-meso-2,6-diaminopimeloyl-D-alanyl-D-alanine + di-trans,octa-cis-undecaprenyl phosphate = di-trans,octa-cis-undecaprenyl diphospho-N-acetyl-alpha-D-muramoyl-L-alanyl-D-glutamyl-meso-2,6-diaminopimeloyl-D-alanyl-D-alanine + UMP. The protein operates within cell wall biogenesis; peptidoglycan biosynthesis. Functionally, catalyzes the initial step of the lipid cycle reactions in the biosynthesis of the cell wall peptidoglycan: transfers peptidoglycan precursor phospho-MurNAc-pentapeptide from UDP-MurNAc-pentapeptide onto the lipid carrier undecaprenyl phosphate, yielding undecaprenyl-pyrophosphoryl-MurNAc-pentapeptide, known as lipid I. This Rubrobacter xylanophilus (strain DSM 9941 / JCM 11954 / NBRC 16129 / PRD-1) protein is Phospho-N-acetylmuramoyl-pentapeptide-transferase.